We begin with the raw amino-acid sequence, 417 residues long: Actin-related protein 10 (417 aa).

The protein belongs to the actin family. Subunit of dynactin, a multiprotein complex part of a tripartite complex with dynein and a adapter, such as BICDL1, BICD2 or HOOK3. The dynactin complex is built around ACTR1A/ACTB filament and consists of an actin-related filament composed of a shoulder domain, a pointed end and a barbed end. Its length is defined by its flexible shoulder domain. The soulder is composed of 2 DCTN1 subunits, 4 DCTN2 and 2 DCTN3. The 4 DCNT2 (via N-terminus) bind the ACTR1A filament and act as molecular rulers to determine the length. The pointed end is important for binding dynein-dynactin cargo adapters. Consists of 4 subunits: ACTR10, DCNT4, DCTN5 and DCTN6. The barbed end is composed of a CAPZA1:CAPZB heterodimers, which binds ACTR1A/ACTB filament and dynactin and stabilizes dynactin.

It is found in the cytoplasm. Its subcellular location is the cytoskeleton. Its function is as follows. Part of the dynactin complex that activates the molecular motor dynein for ultra-processive transport along microtubules. This Mus musculus (Mouse) protein is Actin-related protein 10 (Actr10).